A 515-amino-acid chain; its full sequence is Arabinose import ATP-binding protein AraG 2 (515 aa).

The tract at residues 1–22 (MTMQTMTAASGHDAEAGTPPDG) is disordered. ABC transporter domains follow at residues 25–260 (LALD…MVGR) and 260–511 (RSIE…LIKL). 57–64 (GENGAGKS) provides a ligand contact to ATP.

The protein belongs to the ABC transporter superfamily. Arabinose importer (TC 3.A.1.2.2) family. In terms of assembly, the complex is composed of two ATP-binding proteins (AraG), two transmembrane proteins (AraH) and a solute-binding protein (AraF).

The protein resides in the cell inner membrane. The enzyme catalyses L-arabinose(out) + ATP + H2O = L-arabinose(in) + ADP + phosphate + H(+). Its function is as follows. Part of the ABC transporter complex AraFGH involved in arabinose import. Responsible for energy coupling to the transport system. In Burkholderia cenocepacia (strain HI2424), this protein is Arabinose import ATP-binding protein AraG 2.